The primary structure comprises 360 residues: Chorismate synthase (360 aa).

An NADP(+)-binding site is contributed by Arg-47. Residues 124–126 (RSS), 240–241 (NA), Gly-285, 300–304 (KPVAT), and Arg-326 each bind FMN.

This sequence belongs to the chorismate synthase family. In terms of assembly, homotetramer. It depends on FMNH2 as a cofactor.

The catalysed reaction is 5-O-(1-carboxyvinyl)-3-phosphoshikimate = chorismate + phosphate. The protein operates within metabolic intermediate biosynthesis; chorismate biosynthesis; chorismate from D-erythrose 4-phosphate and phosphoenolpyruvate: step 7/7. Functionally, catalyzes the anti-1,4-elimination of the C-3 phosphate and the C-6 proR hydrogen from 5-enolpyruvylshikimate-3-phosphate (EPSP) to yield chorismate, which is the branch point compound that serves as the starting substrate for the three terminal pathways of aromatic amino acid biosynthesis. This reaction introduces a second double bond into the aromatic ring system. This Cytophaga hutchinsonii (strain ATCC 33406 / DSM 1761 / CIP 103989 / NBRC 15051 / NCIMB 9469 / D465) protein is Chorismate synthase.